A 323-amino-acid polypeptide reads, in one-letter code: Cysteine synthase A (323 aa).

Hydrogen sulfide is bound by residues Asn8 and Arg35. At Lys42 the chain carries N6-(pyridoxal phosphate)lysine. Residues Asn72 and 177-181 (GTGGT) contribute to the pyridoxal 5'-phosphate site. Leu269 is a hydrogen sulfide binding site. Residue Ser273 participates in pyridoxal 5'-phosphate binding.

It belongs to the cysteine synthase/cystathionine beta-synthase family. As to quaternary structure, homodimer. Pyridoxal 5'-phosphate is required as a cofactor.

The enzyme catalyses O-acetyl-L-serine + hydrogen sulfide = L-cysteine + acetate. Its pathway is amino-acid biosynthesis; L-cysteine biosynthesis; L-cysteine from L-serine: step 2/2. This Escherichia coli O157:H7 protein is Cysteine synthase A (cysK).